A 207-amino-acid chain; its full sequence is Thiamine-phosphate synthase (207 aa).

Residues Gln37–Lys41 and Asn69 each bind 4-amino-2-methyl-5-(diphosphooxymethyl)pyrimidine. Mg(2+) is bound by residues Asp70 and Asp89. 4-amino-2-methyl-5-(diphosphooxymethyl)pyrimidine contacts are provided by Ser108 and Lys138. 2-[(2R,5Z)-2-carboxy-4-methylthiazol-5(2H)-ylidene]ethyl phosphate-binding positions include Gly165 and Ile185–Ser186.

This sequence belongs to the thiamine-phosphate synthase family. The cofactor is Mg(2+).

It catalyses the reaction 2-[(2R,5Z)-2-carboxy-4-methylthiazol-5(2H)-ylidene]ethyl phosphate + 4-amino-2-methyl-5-(diphosphooxymethyl)pyrimidine + 2 H(+) = thiamine phosphate + CO2 + diphosphate. The enzyme catalyses 2-(2-carboxy-4-methylthiazol-5-yl)ethyl phosphate + 4-amino-2-methyl-5-(diphosphooxymethyl)pyrimidine + 2 H(+) = thiamine phosphate + CO2 + diphosphate. It carries out the reaction 4-methyl-5-(2-phosphooxyethyl)-thiazole + 4-amino-2-methyl-5-(diphosphooxymethyl)pyrimidine + H(+) = thiamine phosphate + diphosphate. It participates in cofactor biosynthesis; thiamine diphosphate biosynthesis; thiamine phosphate from 4-amino-2-methyl-5-diphosphomethylpyrimidine and 4-methyl-5-(2-phosphoethyl)-thiazole: step 1/1. Functionally, condenses 4-methyl-5-(beta-hydroxyethyl)thiazole monophosphate (THZ-P) and 2-methyl-4-amino-5-hydroxymethyl pyrimidine pyrophosphate (HMP-PP) to form thiamine monophosphate (TMP). This chain is Thiamine-phosphate synthase, found in Janthinobacterium sp. (strain Marseille) (Minibacterium massiliensis).